Consider the following 88-residue polypeptide: Large ribosomal subunit protein eL34 (88 aa).

It belongs to the eukaryotic ribosomal protein eL34 family.

This Methanobrevibacter smithii (strain ATCC 35061 / DSM 861 / OCM 144 / PS) protein is Large ribosomal subunit protein eL34.